A 279-amino-acid chain; its full sequence is Acetylglutamate kinase (279 aa).

Substrate contacts are provided by residues 64–65 (GG), arginine 86, and asparagine 177.

This sequence belongs to the acetylglutamate kinase family. ArgB subfamily.

The protein resides in the cytoplasm. The enzyme catalyses N-acetyl-L-glutamate + ATP = N-acetyl-L-glutamyl 5-phosphate + ADP. It participates in amino-acid biosynthesis; L-arginine biosynthesis; N(2)-acetyl-L-ornithine from L-glutamate: step 2/4. Catalyzes the ATP-dependent phosphorylation of N-acetyl-L-glutamate. This is Acetylglutamate kinase from Campylobacter jejuni subsp. jejuni serotype O:2 (strain ATCC 700819 / NCTC 11168).